The primary structure comprises 341 residues: uncharacterized protein (341 aa).

Belongs to the Gfo/Idh/MocA family.

This is an uncharacterized protein from Bacillus subtilis (strain 168).